Reading from the N-terminus, the 423-residue chain is Methanol:N,N-dimethyl-4-nitrosoaniline oxidoreductase (423 aa).

It belongs to the iron-containing alcohol dehydrogenase family. Homodecamer. It depends on Mg(2+) as a cofactor. Zn(2+) is required as a cofactor. Requires NADPH as cofactor.

It carries out the reaction methanol + A = formaldehyde + AH2. Its function is as follows. Catalyzes the oxidation of methanol to yield formaldehyde. While the in vivo electron acceptor is not known, N,N-dimethyl-4-nitrosoaniline (NDMA) can serve this function in vitro and is reduced to 4-(hydroxylamino)-N,N-dimethylaniline. It is also able to use ethanol and formaldehyde with an activity comparable to methanol, and has a weak activity with methylamine as substrate. This is Methanol:N,N-dimethyl-4-nitrosoaniline oxidoreductase from Mycobacterium sp. (strain DSM 3803 / JC1).